A 231-amino-acid chain; its full sequence is 7-cyano-7-deazaguanine synthase (231 aa).

An ATP-binding site is contributed by 7 to 17 (LSSGLDSVAAL). Residues Cys195, Cys203, Cys206, and Cys209 each contribute to the Zn(2+) site.

This sequence belongs to the QueC family. Zn(2+) serves as cofactor.

The enzyme catalyses 7-carboxy-7-deazaguanine + NH4(+) + ATP = 7-cyano-7-deazaguanine + ADP + phosphate + H2O + H(+). It functions in the pathway purine metabolism; 7-cyano-7-deazaguanine biosynthesis. In terms of biological role, catalyzes the ATP-dependent conversion of 7-carboxy-7-deazaguanine (CDG) to 7-cyano-7-deazaguanine (preQ(0)). The sequence is that of 7-cyano-7-deazaguanine synthase from Methanosarcina barkeri (strain Fusaro / DSM 804).